The primary structure comprises 407 residues: Divalent metal cation transporter MntH (407 aa).

11 consecutive transmembrane segments (helical) span residues Leu-16–Ala-36, Ser-43–Val-63, Trp-95–Val-115, Leu-119–Ile-139, Phe-152–Ser-172, Ala-193–His-213, Ile-239–Phe-259, Leu-288–Gly-308, Phe-318–Ala-338, Ile-346–Leu-366, and Val-387–Ile-407.

The protein belongs to the NRAMP family.

Its subcellular location is the cell inner membrane. In terms of biological role, h(+)-stimulated, divalent metal cation uptake system. This chain is Divalent metal cation transporter MntH, found in Aeromonas hydrophila subsp. hydrophila (strain ATCC 7966 / DSM 30187 / BCRC 13018 / CCUG 14551 / JCM 1027 / KCTC 2358 / NCIMB 9240 / NCTC 8049).